The following is an 84-amino-acid chain: uncharacterized protein (84 aa).

2 helical membrane-spanning segments follow: residues 7-27 (HVNF…ILCI) and 52-72 (ITII…INPC).

The protein localises to the membrane. This is an uncharacterized protein from Saccharomyces cerevisiae (strain ATCC 204508 / S288c) (Baker's yeast).